We begin with the raw amino-acid sequence, 184 residues long: Cytidylate kinase (184 aa).

8–16 is a binding site for ATP; it reads GQPGSGKTT.

Belongs to the cytidylate kinase family. Type 2 subfamily.

It is found in the cytoplasm. It carries out the reaction CMP + ATP = CDP + ADP. The catalysed reaction is dCMP + ATP = dCDP + ADP. The protein is Cytidylate kinase of Pyrobaculum arsenaticum (strain DSM 13514 / JCM 11321 / PZ6).